The following is a 96-amino-acid chain: Co-chaperonin GroES (96 aa).

It belongs to the GroES chaperonin family. Heptamer of 7 subunits arranged in a ring. Interacts with the chaperonin GroEL.

The protein resides in the cytoplasm. In terms of biological role, together with the chaperonin GroEL, plays an essential role in assisting protein folding. The GroEL-GroES system forms a nano-cage that allows encapsulation of the non-native substrate proteins and provides a physical environment optimized to promote and accelerate protein folding. GroES binds to the apical surface of the GroEL ring, thereby capping the opening of the GroEL channel. In Buchnera aphidicola subsp. Acyrthosiphon pisum (strain 5A), this protein is Co-chaperonin GroES.